A 130-amino-acid polypeptide reads, in one-letter code: Small ribosomal subunit protein uS8 (130 aa).

This sequence belongs to the universal ribosomal protein uS8 family.

Its subcellular location is the cytoplasm. In Daucus carota (Wild carrot), this protein is Small ribosomal subunit protein uS8 (RPS15A).